A 1064-amino-acid chain; its full sequence is Carbamoyl phosphate synthase large chain (1064 aa).

The tract at residues 1 to 401 is carboxyphosphate synthetic domain; the sequence is MPKRNDIKKI…SLLKAVRSLE (401 aa). ATP contacts are provided by Arg-129, Arg-169, Gly-175, Gly-176, Glu-208, Ile-210, Glu-215, Gly-241, Val-242, His-243, Gln-284, and Glu-298. An ATP-grasp 1 domain is found at 133–327; sequence KELCESINEP…IAKMSAKIAI (195 aa). The Mg(2+) site is built by Gln-284, Glu-298, and Asn-300. Residues Gln-284, Glu-298, and Asn-300 each coordinate Mn(2+). Residues 402 to 546 are oligomerization domain; that stretch reads IGVFHNEMTE…YSTYEWENES (145 aa). The interval 547-929 is carbamoyl phosphate synthetic domain; sequence KRSDKEKIIV…ALYKSFEAAK (383 aa). In terms of domain architecture, ATP-grasp 2 spans 671–861; that stretch reads EKALQDLDIP…MAQLATQMIL (191 aa). 10 residues coordinate ATP: Arg-707, Ser-746, Leu-748, Glu-752, Gly-777, Val-778, His-779, Ser-780, Gln-820, and Glu-832. Positions 820, 832, and 834 each coordinate Mg(2+). 3 residues coordinate Mn(2+): Gln-820, Glu-832, and Asn-834. One can recognise an MGS-like domain in the interval 930–1064; it reads LHMADYGSVL…QSRSFTTKNI (135 aa). The tract at residues 930 to 1064 is allosteric domain; it reads LHMADYGSVL…QSRSFTTKNI (135 aa).

Belongs to the CarB family. Composed of two chains; the small (or glutamine) chain promotes the hydrolysis of glutamine to ammonia, which is used by the large (or ammonia) chain to synthesize carbamoyl phosphate. Tetramer of heterodimers (alpha,beta)4. The cofactor is Mg(2+). Requires Mn(2+) as cofactor.

The catalysed reaction is hydrogencarbonate + L-glutamine + 2 ATP + H2O = carbamoyl phosphate + L-glutamate + 2 ADP + phosphate + 2 H(+). It carries out the reaction hydrogencarbonate + NH4(+) + 2 ATP = carbamoyl phosphate + 2 ADP + phosphate + 2 H(+). The protein operates within amino-acid biosynthesis; L-arginine biosynthesis; carbamoyl phosphate from bicarbonate: step 1/1. Its pathway is pyrimidine metabolism; UMP biosynthesis via de novo pathway; (S)-dihydroorotate from bicarbonate: step 1/3. Its function is as follows. Large subunit of the glutamine-dependent carbamoyl phosphate synthetase (CPSase). CPSase catalyzes the formation of carbamoyl phosphate from the ammonia moiety of glutamine, carbonate, and phosphate donated by ATP, constituting the first step of 2 biosynthetic pathways, one leading to arginine and/or urea and the other to pyrimidine nucleotides. The large subunit (synthetase) binds the substrates ammonia (free or transferred from glutamine from the small subunit), hydrogencarbonate and ATP and carries out an ATP-coupled ligase reaction, activating hydrogencarbonate by forming carboxy phosphate which reacts with ammonia to form carbamoyl phosphate. The polypeptide is Carbamoyl phosphate synthase large chain (Lactococcus lactis subsp. cremoris (strain MG1363)).